The chain runs to 286 residues: Beta-lactamase SHV-13 (286 aa).

An N-terminal signal peptide occupies residues 1–21; it reads MRYIRLCIISLLATLPLAVHA. The Acyl-ester intermediate role is filled by Ser66. An intrachain disulfide couples Cys73 to Cys119. The Proton acceptor role is filled by Glu164. 230–232 provides a ligand contact to substrate; it reads KTG.

This sequence belongs to the class-A beta-lactamase family.

It carries out the reaction a beta-lactam + H2O = a substituted beta-amino acid. With respect to regulation, inhibited 16-fold better by the beta-lactamase inhibitor clavulanic acid than by tazobactam. Functionally, broad spectrum beta-lactamase which hydrolyzes penicillins, as well as cephalosporins except cephamycins. Also hydrolyzes aztreonam, but not imipenem. Confers highly resistance to ceftazidime, cefotaxime, aztreonam and piperacillin. This chain is Beta-lactamase SHV-13 (bla), found in Klebsiella pneumoniae.